The primary structure comprises 462 residues: Retinoic acid receptor alpha (462 aa).

Positions 1–87 are modulating; the sequence is MASNSSSCPT…PPPLPRIYKP (87 aa). Over residues 52–64 the composition is skewed to polar residues; that stretch reads GYSTPSPATIETQ. The disordered stretch occupies residues 52-77; sequence GYSTPSPATIETQSSSSEEIVPSPPS. Phosphoserine; by CDK7 is present on Ser-77. NR C4-type zinc fingers lie at residues 88 to 108 and 124 to 148; these read CFVC…CEGC and CHRD…LQKC. Residues 88–153 constitute a DNA-binding region (nuclear receptor); it reads CFVCQDKSSG…RLQKCFEVGM (66 aa). Ser-96 is modified (phosphoserine; by PKB/AKT1). A hinge region spans residues 154–182; that stretch reads SKESVRNDRNKKKKEVPKPECSESYTLTP. Residues Lys-166 and Lys-171 each participate in a glycyl lysine isopeptide (Lys-Gly) (interchain with G-Cter in SUMO) cross-link. An NR LBD domain is found at 183–417; the sequence is EVGELIEKVR…PLIQEMLENS (235 aa). Position 219 is a phosphoserine; by PKA (Ser-219). An all-trans-retinoate-binding site is contributed by Cys-235. A UBR5-degron motif is present at residues 254 to 258; sequence IADQI. Ser-287 serves as a coordination point for all-trans-retinoate. Ser-369 bears the Phosphoserine; by PKA mark. Residue Lys-399 forms a Glycyl lysine isopeptide (Lys-Gly) (interchain with G-Cter in SUMO) linkage. The tract at residues 404 to 419 is required for binding corepressor NCOR1; it reads GSMPPLIQEMLENSEG. A 9aaTAD motif is present at residues 408–416; sequence PLIQEMLEN. Residues 419–462 are disordered; that stretch reads GLDTLSGQPGGGGRDGGGLAPPPGSCSPSLSPSSNRSSPATHSP. Residues 426–437 show a composition bias toward gly residues; it reads QPGGGGRDGGGL. Residues 444–462 show a composition bias toward low complexity; the sequence is CSPSLSPSSNRSSPATHSP.

This sequence belongs to the nuclear hormone receptor family. NR1 subfamily. Heterodimer; with RXRA (via C-terminus); association with RXRA is enhanced by pulsatile shear stress. Binds DNA preferentially as a heterodimer. RXRA serves as enhancer to induce RARA binding to RARE. Interacts with RXRG. Interacts with coactivators NCOA3 and NCOA6. Interacts with NCOA7; the interaction requires ligand-binding. Interacts (via the ligand-binding domain) with PRAME; the interaction is ligand (retinoic acid)-dependent. Interacts with AKT1; the interaction phosphorylates RARA and represses transactivation. Interacts with PRKAR1A; the interaction negatively regulates RARA transcriptional activity. Interacts with NCOR1 and NCOR2. Interacts with PRMT2. Interacts with LRIF1. Interacts with ASXL1 and NCOA1. Interacts with ACTN4. In a complex with HDAC3, HDAC5 and HDAC7; the HDACs serve as corepressors of RARA, causing its deacetylation and inhibition of RARE DNA element binding; association with HDAC3, HDAC5 and HDAC7 is increased upon oscillatory shear stress. Interacts with CDK7. In the absence of hormonal ligand, interacts with TACC1. Phosphorylated on serine and threonine residues. Phosphorylation does not change during cell cycle. Phosphorylation on Ser-77 is crucial for transcriptional activity. Phosphorylation by AKT1 is required for the repressor activity but has no effect on DNA binding, protein stability nor subcellular localization. Phosphorylated by PKA in vitro. This phosphorylation on Ser-219 and Ser-369 is critical for ligand binding, nuclear localization and transcriptional activity in response to FSH signaling. In terms of processing, sumoylated with SUMO2, mainly on Lys-399 which is also required for SENP6 binding. On all-trans retinoic acid (ATRA) binding, a conformational change may occur that allows sumoylation on two additional site, Lys-166 and Lys-171. Probably desumoylated by SENP6. Sumoylation levels determine nuclear localization and regulate ATRA-mediated transcriptional activity. Post-translationally, trimethylation enhances heterodimerization with RXRA and positively modulates the transcriptional activation. Ubiquitinated by UBR5, leading to its degradation: UBR5 specifically recognizes and binds ligand-bound RARA when it is not associated with coactivators (NCOAs). In presence of NCOAs, the UBR5-degron is not accessible, preventing its ubiquitination and degradation. In terms of processing, acetylated; acetylation is increased upon pulsatile shear stress and decreased upon oscillatory shear stress. As to expression, expressed in monocytes.

The protein resides in the nucleus. Its subcellular location is the cytoplasm. In terms of biological role, receptor for retinoic acid. Retinoic acid receptors bind as heterodimers to their target response elements in response to their ligands, all-trans or 9-cis retinoic acid, and regulate gene expression in various biological processes. The RXR/RAR heterodimers bind to the retinoic acid response elements (RARE) composed of tandem 5'-AGGTCA-3' sites known as DR1-DR5. In the absence of ligand, the RXR-RAR heterodimers associate with a multiprotein complex containing transcription corepressors that induce histone deacetylation, chromatin condensation and transcriptional suppression. On ligand binding, the corepressors dissociate from the receptors and associate with the coactivators leading to transcriptional activation. Formation of a complex with histone deacetylases might lead to inhibition of RARE DNA element binding and to transcriptional repression. Transcriptional activation and RARE DNA element binding might be supported by the transcription factor KLF2. RARA plays an essential role in the regulation of retinoic acid-induced germ cell development during spermatogenesis. Has a role in the survival of early spermatocytes at the beginning prophase of meiosis. In Sertoli cells, may promote the survival and development of early meiotic prophase spermatocytes. In concert with RARG, required for skeletal growth, matrix homeostasis and growth plate function. Together with RXRA, positively regulates microRNA-10a expression, thereby inhibiting the GATA6/VCAM1 signaling response to pulsatile shear stress in vascular endothelial cells. In association with HDAC3, HDAC5 and HDAC7 corepressors, plays a role in the repression of microRNA-10a and thereby promotes the inflammatory response. This chain is Retinoic acid receptor alpha (RARA), found in Homo sapiens (Human).